The sequence spans 301 residues: Probable alpha-L-glutamate ligase 2 (301 aa).

The ATP-grasp domain occupies 104 to 287 (LQLLSRKSIG…VADKIIQFIE (184 aa)). Residues K141, 178–179 (EY), D187, and 211–213 (RSN) contribute to the ATP site. 3 residues coordinate Mg(2+): D248, E260, and N262. D248, E260, and N262 together coordinate Mn(2+).

Belongs to the RimK family. The cofactor is Mg(2+). It depends on Mn(2+) as a cofactor.

The protein is Probable alpha-L-glutamate ligase 2 of Shewanella denitrificans (strain OS217 / ATCC BAA-1090 / DSM 15013).